The following is a 490-amino-acid chain: Lysine--tRNA ligase (490 aa).

The Mg(2+) site is built by glutamate 398 and glutamate 405.

This sequence belongs to the class-II aminoacyl-tRNA synthetase family. In terms of assembly, homodimer. Mg(2+) is required as a cofactor.

It localises to the cytoplasm. It carries out the reaction tRNA(Lys) + L-lysine + ATP = L-lysyl-tRNA(Lys) + AMP + diphosphate. The protein is Lysine--tRNA ligase of Metamycoplasma arthritidis (strain 158L3-1) (Mycoplasma arthritidis).